We begin with the raw amino-acid sequence, 470 residues long: GTPase grn1 (470 aa).

A compositionally biased stretch (basic residues) spans 1-16; it reads MVSLKKKSKRRTTRLR. Positions 1–56 are disordered; sequence MVSLKKKSKRRTTRLRSRIEKKAAESKRKQKRADKKNPQWKSRIPKDPGIPNSFPY. Residues 17 to 27 show a composition bias toward basic and acidic residues; the sequence is SRIEKKAAESK. Positions 153–333 constitute a CP-type G domain; the sequence is DKEFKKVVEA…LVDSPGIVFP (181 aa). Residues 202 to 205, 276 to 283, and 326 to 329 each bind GTP; these read NKID, GYPNVGKS, and DSPG. The interval 405-415 is RNA-binding; sequence ARKRGRLGRGG.

The protein belongs to the TRAFAC class YlqF/YawG GTPase family.

It localises to the nucleus. The protein localises to the nucleolus. Functionally, required for optimal growth. Required for normal processing of ribosomal pre-rRNA. Required for nuclear export of ribosomal protein rpl2501. The sequence is that of GTPase grn1 from Schizosaccharomyces pombe (strain 972 / ATCC 24843) (Fission yeast).